The chain runs to 330 residues: tRNA N6-adenosine threonylcarbamoyltransferase (330 aa).

Positions 110 and 114 each coordinate Fe cation. Substrate is bound by residues 133–137, Asp-166, Gly-179, and Asn-268; that span reads LVSGG. Asp-296 contacts Fe cation.

Belongs to the KAE1 / TsaD family. Fe(2+) is required as a cofactor.

The protein resides in the cytoplasm. It catalyses the reaction L-threonylcarbamoyladenylate + adenosine(37) in tRNA = N(6)-L-threonylcarbamoyladenosine(37) in tRNA + AMP + H(+). Its function is as follows. Required for the formation of a threonylcarbamoyl group on adenosine at position 37 (t(6)A37) in tRNAs that read codons beginning with adenine. Is involved in the transfer of the threonylcarbamoyl moiety of threonylcarbamoyl-AMP (TC-AMP) to the N6 group of A37, together with TsaE and TsaB. TsaD likely plays a direct catalytic role in this reaction. The protein is tRNA N6-adenosine threonylcarbamoyltransferase of Kosmotoga olearia (strain ATCC BAA-1733 / DSM 21960 / TBF 19.5.1).